The sequence spans 473 residues: LEC14B protein (473 aa).

WD repeat units follow at residues Gly-212–Asp-242, Ala-254–Asp-285, Gly-301–Asp-331, Gly-377–Asp-413, and Tyr-425–Glu-455.

This sequence belongs to the WD repeat LEC14B family.

This Lithospermum erythrorhizon (Purple gromwell) protein is LEC14B protein.